The sequence spans 528 residues: Major facilitator superfamily multidrug transporter mdr3 (528 aa).

Residues 1–37 (MLAMAASAEETNRQSNAGRRSVISPSEAPPEAEQSDV) form a disordered region. The next 7 helical transmembrane spans lie at 50 to 70 (FILILCSTQLFVQGAFGYILI), 91 to 111 (WHVGGYSLTVGTFILIAGKLG), 119 to 139 (ILVLGWAWFGVWSVIGGCSAF), 149 to 169 (ARALQGIGPALLLPNALAIAG), 180 to 200 (MIFSAFAVAAPLGCFTAGVVG), 211 to 231 (WVMWTYSIGCFIIAAVGLWVI), and 241 to 261 (AATLQFDYIGSVLGVAGLLLL). The N-linked (GlcNAc...) asparagine glycan is linked to Asn-262. 5 helical membrane passes run 272 to 292 (GWSTPYVYVLLIGGFLVLGLF), 340 to 360 (VITSGWLMAIACAAFLGGCIL), 375 to 395 (FWSFVIMAWGMDISFPASTTI), 410 to 430 (SLVNTVINYSIAIGLGIAGTV), and 448 to 468 (ALWSSVGLAALAFGIALVFAV).

This sequence belongs to the major facilitator superfamily.

Its subcellular location is the cell membrane. In terms of biological role, major facilitator superfamily transporter that confers resistance to azoles such as itraconazole. This is Major facilitator superfamily multidrug transporter mdr3 from Aspergillus fumigatus (strain ATCC MYA-4609 / CBS 101355 / FGSC A1100 / Af293) (Neosartorya fumigata).